A 301-amino-acid polypeptide reads, in one-letter code: MITPIAVVGPTASGKSALGIELALRLDGEVVNVDSMQLYRGMDIGTAKLTPEERQGIPHHQLDVLDVTETASVARYQQEAVADVEEIMSRGKTPILVGGSMLYVQSLVDDWQFPPTDPAVRARWEARLAEIGVTRLHEELRARDPEAAAIIENNDPRRTVRALEVIELTGQPFKASQPPKDAPPRWGTTILGLRTTADWLNPRIELRTHLMFERGFLEEVEGLVRDHGLIAESTAGRAIGYAQVLDALAGELTLDEAVERTITGTRRYVRRQRAWFNRDHRIRWIDADGDTTARALDILGR.

Glycine 9 to serine 16 serves as a coordination point for ATP. Threonine 11–serine 16 contacts substrate. An interaction with substrate tRNA region spans residues aspartate 34 to glutamine 37.

The protein belongs to the IPP transferase family. Monomer. It depends on Mg(2+) as a cofactor.

The enzyme catalyses adenosine(37) in tRNA + dimethylallyl diphosphate = N(6)-dimethylallyladenosine(37) in tRNA + diphosphate. Functionally, catalyzes the transfer of a dimethylallyl group onto the adenine at position 37 in tRNAs that read codons beginning with uridine, leading to the formation of N6-(dimethylallyl)adenosine (i(6)A). The polypeptide is tRNA dimethylallyltransferase (Corynebacterium efficiens (strain DSM 44549 / YS-314 / AJ 12310 / JCM 11189 / NBRC 100395)).